The sequence spans 278 residues: Orotidine 5'-phosphate decarboxylase (278 aa).

K95 acts as the Proton donor in catalysis.

It belongs to the OMP decarboxylase family. Type 2 subfamily.

It catalyses the reaction orotidine 5'-phosphate + H(+) = UMP + CO2. The protein operates within pyrimidine metabolism; UMP biosynthesis via de novo pathway; UMP from orotate: step 2/2. The protein is Orotidine 5'-phosphate decarboxylase of Mycobacterium ulcerans (strain Agy99).